A 157-amino-acid chain; its full sequence is Cyclic pyranopterin monophosphate synthase (157 aa).

Substrate is bound by residues 74–76 (MCH) and 111–112 (ME). D126 is an active-site residue.

Belongs to the MoaC family. Homohexamer; trimer of dimers.

It catalyses the reaction (8S)-3',8-cyclo-7,8-dihydroguanosine 5'-triphosphate = cyclic pyranopterin phosphate + diphosphate. The protein operates within cofactor biosynthesis; molybdopterin biosynthesis. In terms of biological role, catalyzes the conversion of (8S)-3',8-cyclo-7,8-dihydroguanosine 5'-triphosphate to cyclic pyranopterin monophosphate (cPMP). This Carboxydothermus hydrogenoformans (strain ATCC BAA-161 / DSM 6008 / Z-2901) protein is Cyclic pyranopterin monophosphate synthase.